We begin with the raw amino-acid sequence, 369 residues long: 5-amino-6-(D-ribitylamino)uracil--L-tyrosine 4-hydroxyphenyl transferase (369 aa).

The 237-residue stretch at 56-292 folds into the Radical SAM core domain; the sequence is VTFVVNRNIN…AVARLYFGPL (237 aa). Residues Cys-70, Cys-74, and Cys-77 each contribute to the [4Fe-4S] cluster site.

It belongs to the radical SAM superfamily. CofH family. In terms of assembly, consists of two subunits, CofG and CofH. It depends on [4Fe-4S] cluster as a cofactor.

It carries out the reaction 5-amino-6-(D-ribitylamino)uracil + L-tyrosine + S-adenosyl-L-methionine = 5-amino-5-(4-hydroxybenzyl)-6-(D-ribitylimino)-5,6-dihydrouracil + 2-iminoacetate + 5'-deoxyadenosine + L-methionine + H(+). It functions in the pathway cofactor biosynthesis; coenzyme F0 biosynthesis. In terms of biological role, catalyzes the radical-mediated synthesis of 5-amino-5-(4-hydroxybenzyl)-6-(D-ribitylimino)-5,6-dihydrouracil from 5-amino-6-(D-ribitylamino)uracil and L-tyrosine. The protein is 5-amino-6-(D-ribitylamino)uracil--L-tyrosine 4-hydroxyphenyl transferase of Methanopyrus kandleri (strain AV19 / DSM 6324 / JCM 9639 / NBRC 100938).